Here is a 351-residue protein sequence, read N- to C-terminus: Histidinol-phosphate aminotransferase (351 aa).

Residue Lys-221 is modified to N6-(pyridoxal phosphate)lysine.

It belongs to the class-II pyridoxal-phosphate-dependent aminotransferase family. Histidinol-phosphate aminotransferase subfamily. As to quaternary structure, homodimer. Pyridoxal 5'-phosphate serves as cofactor.

It catalyses the reaction L-histidinol phosphate + 2-oxoglutarate = 3-(imidazol-4-yl)-2-oxopropyl phosphate + L-glutamate. It functions in the pathway amino-acid biosynthesis; L-histidine biosynthesis; L-histidine from 5-phospho-alpha-D-ribose 1-diphosphate: step 7/9. The chain is Histidinol-phosphate aminotransferase from Staphylococcus saprophyticus subsp. saprophyticus (strain ATCC 15305 / DSM 20229 / NCIMB 8711 / NCTC 7292 / S-41).